A 227-amino-acid polypeptide reads, in one-letter code: Phosphoribosylformylglycinamidine synthase subunit PurQ (227 aa).

Residues 3 to 225 (FAVIVLPGSN…VKNWRETHVT (223 aa)) enclose the Glutamine amidotransferase type-1 domain. The active-site Nucleophile is Cys86. Active-site residues include His194 and Glu196.

In terms of assembly, part of the FGAM synthase complex composed of 1 PurL, 1 PurQ and 2 PurS subunits.

Its subcellular location is the cytoplasm. The enzyme catalyses N(2)-formyl-N(1)-(5-phospho-beta-D-ribosyl)glycinamide + L-glutamine + ATP + H2O = 2-formamido-N(1)-(5-O-phospho-beta-D-ribosyl)acetamidine + L-glutamate + ADP + phosphate + H(+). The catalysed reaction is L-glutamine + H2O = L-glutamate + NH4(+). Its pathway is purine metabolism; IMP biosynthesis via de novo pathway; 5-amino-1-(5-phospho-D-ribosyl)imidazole from N(2)-formyl-N(1)-(5-phospho-D-ribosyl)glycinamide: step 1/2. Functionally, part of the phosphoribosylformylglycinamidine synthase complex involved in the purines biosynthetic pathway. Catalyzes the ATP-dependent conversion of formylglycinamide ribonucleotide (FGAR) and glutamine to yield formylglycinamidine ribonucleotide (FGAM) and glutamate. The FGAM synthase complex is composed of three subunits. PurQ produces an ammonia molecule by converting glutamine to glutamate. PurL transfers the ammonia molecule to FGAR to form FGAM in an ATP-dependent manner. PurS interacts with PurQ and PurL and is thought to assist in the transfer of the ammonia molecule from PurQ to PurL. This is Phosphoribosylformylglycinamidine synthase subunit PurQ from Bacillus subtilis (strain 168).